The chain runs to 256 residues: Type III pantothenate kinase (256 aa).

Residue 6 to 13 (DIGNSSIV) participates in ATP binding. Substrate-binding positions include tyrosine 101 and 108-111 (GADR). Aspartate 110 acts as the Proton acceptor in catalysis. Aspartate 130 serves as a coordination point for K(+). Position 133 (threonine 133) interacts with ATP. Threonine 185 lines the substrate pocket.

The protein belongs to the type III pantothenate kinase family. As to quaternary structure, homodimer. The cofactor is NH4(+). K(+) is required as a cofactor.

The protein localises to the cytoplasm. The catalysed reaction is (R)-pantothenate + ATP = (R)-4'-phosphopantothenate + ADP + H(+). The protein operates within cofactor biosynthesis; coenzyme A biosynthesis; CoA from (R)-pantothenate: step 1/5. In terms of biological role, catalyzes the phosphorylation of pantothenate (Pan), the first step in CoA biosynthesis. The protein is Type III pantothenate kinase of Shouchella clausii (strain KSM-K16) (Alkalihalobacillus clausii).